A 287-amino-acid polypeptide reads, in one-letter code: DegV domain-containing protein DR_0500 (287 aa).

Positions 7–280 (FAVVTDGGLD…PRALGVAAAP (274 aa)) constitute a DegV domain. Hexadecanoate-binding residues include serine 62 and serine 93.

In terms of biological role, may bind long-chain fatty acids, such as palmitate, and may play a role in lipid transport or fatty acid metabolism. In Deinococcus radiodurans (strain ATCC 13939 / DSM 20539 / JCM 16871 / CCUG 27074 / LMG 4051 / NBRC 15346 / NCIMB 9279 / VKM B-1422 / R1), this protein is DegV domain-containing protein DR_0500.